A 282-amino-acid chain; its full sequence is Bifunctional protein FolD (282 aa).

NADP(+) is bound by residues glycine 164–serine 166, isoleucine 189, and isoleucine 230.

The protein belongs to the tetrahydrofolate dehydrogenase/cyclohydrolase family. In terms of assembly, homodimer.

The enzyme catalyses (6R)-5,10-methylene-5,6,7,8-tetrahydrofolate + NADP(+) = (6R)-5,10-methenyltetrahydrofolate + NADPH. The catalysed reaction is (6R)-5,10-methenyltetrahydrofolate + H2O = (6R)-10-formyltetrahydrofolate + H(+). The protein operates within one-carbon metabolism; tetrahydrofolate interconversion. Catalyzes the oxidation of 5,10-methylenetetrahydrofolate to 5,10-methenyltetrahydrofolate and then the hydrolysis of 5,10-methenyltetrahydrofolate to 10-formyltetrahydrofolate. The sequence is that of Bifunctional protein FolD from Campylobacter jejuni subsp. doylei (strain ATCC BAA-1458 / RM4099 / 269.97).